The sequence spans 25 residues: Small ribosomal subunit protein eS32 (25 aa).

The disordered stretch occupies residues 1 to 25 (MRAKWRKKRMRRLKRKRRKMRQRSK).

Belongs to the eukaryotic ribosomal protein eS32 family. As to quaternary structure, component of the large ribosomal subunit.

It is found in the cytoplasm. In terms of biological role, component of the small ribosomal subunit. The ribosome is a large ribonucleoprotein complex responsible for the synthesis of proteins in the cell. In Cyprinus carpio (Common carp), this protein is Small ribosomal subunit protein eS32 (rpl41).